A 436-amino-acid chain; its full sequence is UPF0597 protein YhaM (436 aa).

It belongs to the UPF0597 family.

This is UPF0597 protein YhaM from Escherichia coli (strain 55989 / EAEC).